Here is a 561-residue protein sequence, read N- to C-terminus: Mercuric reductase (561 aa).

The 65-residue stretch at 1 to 65 (MTTLKITGMT…AVAGLGYEAT (65 aa)) folds into the HMA domain. A metal cation contacts are provided by Cys11 and Cys14. FAD is bound by residues Ala110, Gly130, and Thr135. Cys136 and Cys141 form a disulfide bridge. The FAD site is built by Lys145, Ala211, Asp403, and Val411. Residues Cys558 and Cys559 each coordinate Hg(2+).

Belongs to the class-I pyridine nucleotide-disulfide oxidoreductase family. In terms of assembly, homodimer. It depends on FAD as a cofactor.

The enzyme catalyses Hg + NADP(+) + H(+) = Hg(2+) + NADPH. Resistance to Hg(2+) in bacteria appears to be governed by a specialized system which includes mercuric reductase. MerA protein is responsible for volatilizing mercury as Hg(0). In Acinetobacter calcoaceticus, this protein is Mercuric reductase (merA).